The following is a 215-amino-acid chain: Probable phosphoglycerate mutase GpmB (215 aa).

Substrate is bound by residues 8-15, 21-22, Arg-58, Arg-60, 82-85, and 151-152; these read RHGESEWN, QG, ELHM, and GI. His-9 functions as the Tele-phosphohistidine intermediate in the catalytic mechanism. Catalysis depends on Glu-82, which acts as the Proton donor/acceptor.

This sequence belongs to the phosphoglycerate mutase family. GpmB subfamily.

It catalyses the reaction (2R)-2-phosphoglycerate = (2R)-3-phosphoglycerate. It functions in the pathway carbohydrate degradation; glycolysis; pyruvate from D-glyceraldehyde 3-phosphate: step 3/5. The chain is Probable phosphoglycerate mutase GpmB from Photorhabdus laumondii subsp. laumondii (strain DSM 15139 / CIP 105565 / TT01) (Photorhabdus luminescens subsp. laumondii).